The sequence spans 133 residues: Small ribosomal subunit protein uS8 (133 aa).

It belongs to the universal ribosomal protein uS8 family. In terms of assembly, part of the 30S ribosomal subunit. Contacts proteins S5 and S12.

One of the primary rRNA binding proteins, it binds directly to 16S rRNA central domain where it helps coordinate assembly of the platform of the 30S subunit. This is Small ribosomal subunit protein uS8 from Chlamydia trachomatis serovar L2b (strain UCH-1/proctitis).